A 383-amino-acid polypeptide reads, in one-letter code: NIPA-like protein 2 (383 aa).

Residues Asn-23 and Asn-33 are each glycosylated (N-linked (GlcNAc...) asparagine). 9 consecutive transmembrane segments (helical) span residues 46 to 66 (IHLF…ISLN), 88 to 108 (VLWL…FAAY), 115 to 135 (LIAP…VLFL), 144 to 164 (LLGM…APNI), 177 to 197 (FVGW…CILL), 208 to 228 (IVVL…SVKA), 243 to 263 (LTYA…VFQV), 278 to 298 (VVPV…IIFY), and 306 to 326 (FLTV…VFLV). Positions 352 to 383 (DKVQPDSNGLSYGTLPDGGDSTRGQCGEKKES) are disordered.

It belongs to the NIPA family.

Its subcellular location is the membrane. This Mus musculus (Mouse) protein is NIPA-like protein 2 (Nipal2).